The sequence spans 1137 residues: MQIFTILLLFNIFPSIFVQNLPDTTVAPRTKRTIKIGIAAAQRIQTSSIGWSVCGGAVPLAIERLKEMGFVKDFDFEYIVDYTECDLGSVVRAGMEFIKTHKVDVIIGPPCAQALRLMSFLAENYKKPVLGWGFVSDTDLSDVIRFPHLTTVIPNSLMLGYAASKMLTTFHWNRVALLYYFSDVKYCSGVMNDIEATFNDPSTPNVNIVIKAEIYLNDNETTDNVFQTVKSRARIILWCTQTSVEKRDYLIKIATHDMIGDEYVHIMLSMRNVAFGTQTSLGKPTFSQSGLTPIWESFTEGTDGFEKMAKQAATRMFVLDVNSEVADKKYLEYMQKNIIKAVQSPPMNCSTVECMTANTTIMGGYARHLFDVVYLYGIALTHTNSTDPAVYGDVDVLVHQFVTSFQGMTGHVVISPNLTRMPIFQLYGLNSDYDQVALVDFTYTNSVMVPNVTLFYKDEGGAVWSYYGHSRPLDIPICGFLGKSCPVSFWEQYKILIFVAIAVIVLMVLIMIIGCLCVISGKRAERARINAEWQVPFAKLIESEKQVRGKGASRRSLQSAPSISTGHSGVTTVSDFCENYTMMMYEKEMVLTAKYQYTHLTKADKERFVKMRKLDHENINRFIGLSIDSAHFISVTKLCSRGSLQDILSRGNFSMDYFFMFCIIRDVAKGLEYLHKTFLRLHGNLRSATCLVNDSWQVKLAEYGMDNLVEEQTPPKKRLLWVAPEVLRGSLSVSQMEPSADIYSFAIIASEILTKKEAWDILDRKEDCEEIVYNVKKGGLFPIRPEIITDIHDVNPALIALVKDCWAEVPEDRPTAENICSQMKGLVSKQKTNLMDHVFNMLEEYTSTLEEEIEERTKELTLEKKKADILLSRMLPKQVAERLKAGQTVEPEGFDSVTVFFSDVVKFTILASKCSPFQTVNLLNDLYSNFDTIIEQHGVYKVESIGDGYLCVSGLPTRNGYAHIKQIVDMSLKFMEYCKSFNIPHLPRENVELRIGVNSGPCVAGVVGLSMPRYCLFGDTVNTASRMESNGKPSLIHLTNDAHSLLTTHYPNQYETSSRGEVIIKGKGVMETFWVHGRFGEMEPTELRSISNRSTPPVTNDRWIPNPSSSHGSRPSSVYDPLQGHQKFKMDTLKVAN.

The first 18 residues, 1–18 (MQIFTILLLFNIFPSIFV), serve as a signal peptide directing secretion. Residues 19–494 (QNLPDTTVAP…CPVSFWEQYK (476 aa)) lie on the Extracellular side of the membrane. Residues N219, N348, N358, N384, N417, and N451 are each glycosylated (N-linked (GlcNAc...) asparagine). The helical transmembrane segment at 495–515 (ILIFVAIAVIVLMVLIMIIGC) threads the bilayer. The Cytoplasmic segment spans residues 516–1137 (LCVISGKRAE…FKMDTLKVAN (622 aa)). Positions 557-826 (LQSAPSISTG…ENICSQMKGL (270 aa)) constitute a Protein kinase domain. A coiled-coil region spans residues 840 to 871 (NMLEEYTSTLEEEIEERTKELTLEKKKADILL). The Guanylate cyclase domain maps to 898 to 1028 (TVFFSDVVKF…DTVNTASRME (131 aa)). Residues 1086–1122 (ELRSISNRSTPPVTNDRWIPNPSSSHGSRPSSVYDPL) are disordered. Positions 1088–1098 (RSISNRSTPPV) are enriched in polar residues. The segment covering 1105 to 1117 (PNPSSSHGSRPSS) has biased composition (low complexity).

The protein belongs to the adenylyl cyclase class-4/guanylyl cyclase family. In terms of tissue distribution, expressed predominantly in sensory neurons. Expressed asymmetrically in the right ASE (ASER) neuron and bilaterally in ASI and URX neurons. Expressed in PVT and bilaterally in AIY non-sensory neurons. Expressed in intestine.

The protein resides in the membrane. It catalyses the reaction GTP = 3',5'-cyclic GMP + diphosphate. Guanylate cyclase involved in the production of the second messenger cGMP. Involved in the sensing of K+ gradient by the ASE right (ASER) sensory neuron. This is Receptor-type guanylate cyclase gcy-1 (gcy-1) from Caenorhabditis elegans.